Consider the following 200-residue polypeptide: Ras-related protein RHN1 (200 aa).

Residues 17 to 25, 36 to 42, 65 to 69, 123 to 126, and 153 to 155 contribute to the GTP site; these read GDMGAGKSS, LEFQEST, DTAGQ, NKAD, and SAK. The Effector region signature appears at 39-47; the sequence is QESTIGAAF. Residues Cys-198 and Cys-199 are each lipidated (S-geranylgeranyl cysteine).

The protein belongs to the small GTPase superfamily. Rab family. In terms of tissue distribution, high in stem, root, and inflorescence.

The protein resides in the cell membrane. Its function is as follows. Protein transport. Probably involved in vesicular traffic. This is Ras-related protein RHN1 (RHN1) from Nicotiana plumbaginifolia (Leadwort-leaved tobacco).